We begin with the raw amino-acid sequence, 86 residues long: MAHKKAGGSTRNGRDSESKRLGVKRFGGESVLAGNIIVRQRGTKFHAGTNVGIGKDHTLFALSDGKVKFEVKGPNNRKFVSIETAE.

Residues 1–22 (MAHKKAGGSTRNGRDSESKRLG) form a disordered region.

Belongs to the bacterial ribosomal protein bL27 family.

The chain is Large ribosomal subunit protein bL27 from Vibrio cholerae serotype O1 (strain ATCC 39315 / El Tor Inaba N16961).